The primary structure comprises 353 residues: 4-hydroxy-3-methylbut-2-en-1-yl diphosphate synthase (flavodoxin) (353 aa).

4 residues coordinate [4Fe-4S] cluster: Cys263, Cys266, Cys298, and Glu305.

It belongs to the IspG family. [4Fe-4S] cluster is required as a cofactor.

The enzyme catalyses (2E)-4-hydroxy-3-methylbut-2-enyl diphosphate + oxidized [flavodoxin] + H2O + 2 H(+) = 2-C-methyl-D-erythritol 2,4-cyclic diphosphate + reduced [flavodoxin]. It participates in isoprenoid biosynthesis; isopentenyl diphosphate biosynthesis via DXP pathway; isopentenyl diphosphate from 1-deoxy-D-xylulose 5-phosphate: step 5/6. Functionally, converts 2C-methyl-D-erythritol 2,4-cyclodiphosphate (ME-2,4cPP) into 1-hydroxy-2-methyl-2-(E)-butenyl 4-diphosphate. In Geobacter sulfurreducens (strain ATCC 51573 / DSM 12127 / PCA), this protein is 4-hydroxy-3-methylbut-2-en-1-yl diphosphate synthase (flavodoxin).